The chain runs to 424 residues: Arginine biosynthesis bifunctional protein ArgJ (424 aa).

Substrate contacts are provided by Thr166, Lys192, Thr203, Glu290, Asn419, and Thr424. Catalysis depends on Thr203, which acts as the Nucleophile.

Belongs to the ArgJ family. As to quaternary structure, heterotetramer of two alpha and two beta chains.

The protein resides in the cytoplasm. The catalysed reaction is N(2)-acetyl-L-ornithine + L-glutamate = N-acetyl-L-glutamate + L-ornithine. It carries out the reaction L-glutamate + acetyl-CoA = N-acetyl-L-glutamate + CoA + H(+). The protein operates within amino-acid biosynthesis; L-arginine biosynthesis; L-ornithine and N-acetyl-L-glutamate from L-glutamate and N(2)-acetyl-L-ornithine (cyclic): step 1/1. It functions in the pathway amino-acid biosynthesis; L-arginine biosynthesis; N(2)-acetyl-L-ornithine from L-glutamate: step 1/4. In terms of biological role, catalyzes two activities which are involved in the cyclic version of arginine biosynthesis: the synthesis of N-acetylglutamate from glutamate and acetyl-CoA as the acetyl donor, and of ornithine by transacetylation between N(2)-acetylornithine and glutamate. In Colwellia psychrerythraea (strain 34H / ATCC BAA-681) (Vibrio psychroerythus), this protein is Arginine biosynthesis bifunctional protein ArgJ.